The sequence spans 135 residues: MLSPKRTKFRKYHRGRLTGKIYLIDKVVFGNYALQSLEPGWITSRQIEAARRVITRYAKRGGKLWIRIFPDKPVTFRAAETRMGSRKGNVEYWVAIVKPGKILYEVLGISESIAKYSLKIAGYKMPIKTRVIVKI.

This sequence belongs to the universal ribosomal protein uL16 family. In terms of assembly, part of the 50S ribosomal subunit.

The protein resides in the plastid. It localises to the chloroplast. In Euglena gracilis, this protein is Large ribosomal subunit protein uL16c.